The following is a 90-amino-acid chain: Small ribosomal subunit protein uS15c (90 aa).

The protein belongs to the universal ribosomal protein uS15 family. As to quaternary structure, part of the 30S ribosomal subunit.

The protein localises to the plastid. The protein resides in the chloroplast. This is Small ribosomal subunit protein uS15c (rps15) from Nandina domestica (Heavenly bamboo).